A 293-amino-acid chain; its full sequence is LysM and putative peptidoglycan-binding domain-containing protein 4 (293 aa).

Residues 1–214 (MRQKEVLAKS…VADGADCGIQ (214 aa)) lie on the Extracellular side of the membrane. The interval 28–65 (FNNGSGDSGDSSEEESHQVVLRPRGKEHQKNSSQRPGA) is disordered. N30 carries N-linked (GlcNAc...) asparagine glycosylation. The region spanning 71-115 (LQRELAQEDSLNKLALQYGCKVADIKKANNFIREQDLYALKSIKI) is the LysM domain. Residues 215 to 235 (WWNAVFLMLLIGIVLPVFYLV) form a helical membrane-spanning segment. Topologically, residues 236-293 (YFKIQATGEPSNGLNATVVPNGSMTLSPVPGQAPRLAIPVPTLPASDSQVSPTTQAGA) are cytoplasmic.

The protein localises to the membrane. The chain is LysM and putative peptidoglycan-binding domain-containing protein 4 (Lysmd4) from Mus musculus (Mouse).